Reading from the N-terminus, the 247-residue chain is MNNFLLEDIINKKLLSNQYQDTVPNGLQIEGTEIVKKIITGVTACQALLDKALFYNADTLIVHHGYFWKNESKYIHNMQRQRLKTILSHNINLYSWHLPLDVHPKLGNNAQIAKKLNIDIQGSILPYVLWGTTKNKMTGFEFANKIERKFKKYPIHLYENAPLYISRVAWCSGRGQGFIKKACAFGIDAFLTGEISEETTHIAKELGIHFFSLGHHATEKDGVKSLGEWLQRKYDLCVDFIDIYNPA.

Positions 63, 64, 101, 215, and 219 each coordinate a divalent metal cation.

Belongs to the GTP cyclohydrolase I type 2/NIF3 family. As to quaternary structure, homohexamer.

This Buchnera aphidicola subsp. Acyrthosiphon pisum (strain APS) (Acyrthosiphon pisum symbiotic bacterium) protein is GTP cyclohydrolase 1 type 2 homolog.